The chain runs to 945 residues: Isoleucine--tRNA ligase (945 aa).

The 'HIGH' region motif lies at 66–76 (PYANGDIHLGH). An L-isoleucyl-5'-AMP-binding site is contributed by E581. A 'KMSKS' region motif is present at residues 622-626 (KMSKS). An ATP-binding site is contributed by K625. 4 residues coordinate Zn(2+): C908, C911, C928, and C931.

The protein belongs to the class-I aminoacyl-tRNA synthetase family. IleS type 1 subfamily. Monomer. Requires Zn(2+) as cofactor.

It is found in the cytoplasm. The catalysed reaction is tRNA(Ile) + L-isoleucine + ATP = L-isoleucyl-tRNA(Ile) + AMP + diphosphate. In terms of biological role, catalyzes the attachment of isoleucine to tRNA(Ile). As IleRS can inadvertently accommodate and process structurally similar amino acids such as valine, to avoid such errors it has two additional distinct tRNA(Ile)-dependent editing activities. One activity is designated as 'pretransfer' editing and involves the hydrolysis of activated Val-AMP. The other activity is designated 'posttransfer' editing and involves deacylation of mischarged Val-tRNA(Ile). This chain is Isoleucine--tRNA ligase, found in Burkholderia lata (strain ATCC 17760 / DSM 23089 / LMG 22485 / NCIMB 9086 / R18194 / 383).